The sequence spans 355 residues: Protein MGF 360-10L (355 aa).

An ANK repeat occupies 57 to 89; the sequence is DLNTALMLATKENNYQLIKLFTEWGADINYGLI.

Belongs to the asfivirus MGF 360 family.

Functionally, plays a role in virus cell tropism, and may be required for efficient virus replication in macrophages. The polypeptide is Protein MGF 360-10L (African swine fever virus (isolate Tick/Malawi/Lil 20-1/1983) (ASFV)).